The chain runs to 451 residues: tRNA modification GTPase MnmE (451 aa).

Residues Arg-25, Glu-87, and Arg-127 each contribute to the (6S)-5-formyl-5,6,7,8-tetrahydrofolate site. Residues 222–374 form the TrmE-type G domain; that stretch reads GLRVALVGRP…FVQVLLERCG (153 aa). Asn-232 is a binding site for K(+). GTP is bound by residues 232–237, 251–257, and 276–279; these read NVGKSS, TELPGTT, and DTAG. Ser-236 is a binding site for Mg(2+). K(+) contacts are provided by Thr-251, Leu-253, and Thr-256. Thr-257 contacts Mg(2+). Lys-451 is a (6S)-5-formyl-5,6,7,8-tetrahydrofolate binding site.

Belongs to the TRAFAC class TrmE-Era-EngA-EngB-Septin-like GTPase superfamily. TrmE GTPase family. As to quaternary structure, homodimer. Heterotetramer of two MnmE and two MnmG subunits. K(+) serves as cofactor.

Its subcellular location is the cytoplasm. In terms of biological role, exhibits a very high intrinsic GTPase hydrolysis rate. Involved in the addition of a carboxymethylaminomethyl (cmnm) group at the wobble position (U34) of certain tRNAs, forming tRNA-cmnm(5)s(2)U34. This chain is tRNA modification GTPase MnmE, found in Synechococcus sp. (strain CC9902).